The following is a 134-amino-acid chain: Small ribosomal subunit protein uS9c (134 aa).

Basic and acidic residues predominate over residues 105 to 114; that stretch reads DHHLTRDARA. The tract at residues 105-134 is disordered; sequence DHHLTRDARAKERKKYGLHKARKAPQYSKR. The span at 115–134 shows a compositional bias: basic residues; the sequence is KERKKYGLHKARKAPQYSKR.

This sequence belongs to the universal ribosomal protein uS9 family.

The protein resides in the plastid. It is found in the cyanelle. In Cyanophora paradoxa, this protein is Small ribosomal subunit protein uS9c (rps9).